The following is a 545-amino-acid chain: Carboxylesterase 5A (545 aa).

The signal sequence occupies residues 1 to 28 (MSGMWVHPGRTLIWALWVLAAVIKGPAA). Residue Asn86 is glycosylated (N-linked (GlcNAc...) (complex) asparagine). A disulfide bridge links Cys94 with Cys121. An N-linked (GlcNAc...) asparagine glycan is attached at Asn134. Ser226 (acyl-ester intermediate) is an active-site residue. Cys281 and Cys292 are disulfide-bonded. The active-site Charge relay system is the Glu346. 2 N-linked (GlcNAc...) asparagine glycosylation sites follow: Asn363 and Asn443. Residue His454 is the Charge relay system of the active site.

Belongs to the type-B carboxylesterase/lipase family. Post-translationally, N-glycosylated; contains a fucosylated complex carbohydrate. Present at high level in urine. Expressed in the kidney proximal straight tubular cells and is secreted from the apical compartment of the cells into the urine (at protein level). In mature cats, it is present at higher level in intact males than in castrated males or in intact or spayed females.

The protein resides in the secreted. It catalyses the reaction a carboxylic ester + H2O = an alcohol + a carboxylate + H(+). Carboxylesterase present at high level in urine that regulates production of felinine, a probable pheromone precursor. Probably acts by hydrolyzing the peptide bond of the felinine precursor 3-methylbutanol cyteinylglycine, producing felinine and glycine in cat urine. The polypeptide is Carboxylesterase 5A (CES5A) (Felis catus (Cat)).